The sequence spans 296 residues: Peptide transport system permease protein SapC (296 aa).

Residues 1–28 (MPYDSVYSEKRPPGTLRTAWRKFYSDAS) are Cytoplasmic-facing. Residues 29–49 (AMVGLYGCAGLAVLCIFGGWF) traverse the membrane as a helical segment. The Periplasmic segment spans residues 50–98 (APYGIDQQFLGYQLLPPSWSRYGEVSFFLGTDDLGRDVLSRLLSGAAPT). A helical transmembrane segment spans residues 99 to 119 (VGGAFVVTLAATICGLVLGTF). In terms of domain architecture, ABC transmembrane type-1 spans 99 to 284 (VGGAFVVTLA…ISVLLVNLLG (186 aa)). The Cytoplasmic portion of the chain corresponds to 120–133 (AGATHGLRSAVLNH). The chain crosses the membrane as a helical span at residues 134-154 (ILDTLLAIPSLLLAIIVVAFA). The Periplasmic portion of the chain corresponds to 155 to 196 (GPSLSHAMFAVWLALLPRMVRSIYSMVHDELEKEYVIAARLD). The helical transmembrane segment at 197–217 (GASTLNILWFAVMPNITAGLV) threads the bilayer. Over 218–222 (TEITR) the chain is Cytoplasmic. Residues 223–243 (ALSMAILDIAALGFLDLGAQL) traverse the membrane as a helical segment. At 244-257 (PSPEWGAMLGDALE) the chain is on the periplasmic side. The helical transmembrane segment at 258–278 (LIYVAPWTVMLPGAAIMISVL) threads the bilayer. At 279-296 (LVNLLGDGVRRAIIAGVE) the chain is on the cytoplasmic side.

The protein belongs to the binding-protein-dependent transport system permease family. OppBC subfamily.

The protein localises to the cell inner membrane. In terms of biological role, involved in a peptide intake transport system that plays a role in the resistance to antimicrobial peptides. This is Peptide transport system permease protein SapC (sapC) from Escherichia coli O6:H1 (strain CFT073 / ATCC 700928 / UPEC).